The sequence spans 956 residues: Dual specificity protein kinase YAK1 homolog (956 aa).

The Protein kinase domain maps to 122-464; that stretch reads YIVKDLLGHG…PFQAAKHPFI (343 aa). ATP-binding positions include 128 to 136 and Lys-151; that span reads LGHGTFGQV. The residue at position 222 (Ser-222) is a Phosphoserine. Asp-249 (proton acceptor) is an active-site residue. Disordered stretches follow at residues 620 to 657, 672 to 781, and 806 to 956; these read LGTS…HGSP, SAGY…NYSD, and GSTD…GSIA. The segment covering 622–636 has biased composition (polar residues); sequence TSPSQFTPNTNNQFL. A compositionally biased stretch (low complexity) spans 672–691; it reads SAGYSGGSQSQDSSLSQAQG. Composition is skewed to polar residues over residues 697-713, 725-757, and 806-817; these read FYQN…SPSR, QTQG…SSTA, and GSTDASSYSRRF. Residues 818–830 are compositionally biased toward low complexity; the sequence is NSNASTSSSNPTT. Polar residues-rich tracts occupy residues 838 to 849, 870 to 884, and 902 to 912; these read QAFSQVETGSPP, VSQN…QPPQ, and MNAQLPPSNTN. Low complexity predominate over residues 913–924; sequence SGGQQRSPRSSS. Residues 937-947 are compositionally biased toward polar residues; that stretch reads NHVPNVPSTSH.

The protein belongs to the protein kinase superfamily. Ser/Thr protein kinase family. Autophosphorylated at Ser-222.

It catalyses the reaction L-seryl-[protein] + ATP = O-phospho-L-seryl-[protein] + ADP + H(+). The catalysed reaction is L-threonyl-[protein] + ATP = O-phospho-L-threonyl-[protein] + ADP + H(+). The enzyme catalyses L-tyrosyl-[protein] + ATP = O-phospho-L-tyrosyl-[protein] + ADP + H(+). In terms of biological role, dual specificity protein kinase that phosphorylates ANN1, ANN2 and CP29B at serine and threonine residues, and ANN1, ANN2 and ANN4 at tyrosine residues. May regulate the phosphorylation status of annexin proteins. Acts as a positive regulator in abscisic acid (ABA)-mediated regulation of postgermination growth and drought response. May regulate the expression of ABA-responsive genes such as RD22, RD29A, LTI65/RD29B and RAB18. The protein is Dual specificity protein kinase YAK1 homolog of Arabidopsis thaliana (Mouse-ear cress).